Here is a 157-residue protein sequence, read N- to C-terminus: SsrA-binding protein (157 aa).

Positions 133–157 are disordered; that stretch reads LHDKRETAKERDWQRDKARLMRDKG. Residues 135 to 157 are compositionally biased toward basic and acidic residues; the sequence is DKRETAKERDWQRDKARLMRDKG.

This sequence belongs to the SmpB family.

It localises to the cytoplasm. Functionally, required for rescue of stalled ribosomes mediated by trans-translation. Binds to transfer-messenger RNA (tmRNA), required for stable association of tmRNA with ribosomes. tmRNA and SmpB together mimic tRNA shape, replacing the anticodon stem-loop with SmpB. tmRNA is encoded by the ssrA gene; the 2 termini fold to resemble tRNA(Ala) and it encodes a 'tag peptide', a short internal open reading frame. During trans-translation Ala-aminoacylated tmRNA acts like a tRNA, entering the A-site of stalled ribosomes, displacing the stalled mRNA. The ribosome then switches to translate the ORF on the tmRNA; the nascent peptide is terminated with the 'tag peptide' encoded by the tmRNA and targeted for degradation. The ribosome is freed to recommence translation, which seems to be the essential function of trans-translation. The sequence is that of SsrA-binding protein from Methylobacterium sp. (strain 4-46).